We begin with the raw amino-acid sequence, 423 residues long: MTLQAAPRSAAAQQREPDLRQEVHDAARRARVAARLLAVVPTGVKDRALHAAADAILAHVDRILSANAEDLDAARAADTPAAMLDRLALNPQRVDGIAAGLRQVAGLPDPVGEVLRGYTLPNGLQLRQQRVPLGVVGMIYEGRPNVTVDAFGLTLKSGNAALLRGSSSAARSNEALVNVLRSALDSEQLPADAVQLLSSADRSTVTHLIQARGLVDVAIPRGGAGLIDAVVRDAQVPTIETGVGNCHVYVHEAADLDVAERILLNSKTRRPSVCNAAETLLVDAAIAEHAMPRLIGALQDAGVTVHLDADEQDLRREYLAMEIAVAVVDGVDGAIAHINEYGTGHTEAIVTTNLAAAQRFTERIDAAAVMVNASTAFTDGEQFGFGAEIGISTQKLHARGPMGLPELTSTKWIVWGEGHTRPA.

Positions 1–14 are enriched in low complexity; sequence MTLQAAPRSAAAQQ. Positions 1 to 25 are disordered; the sequence is MTLQAAPRSAAAQQREPDLRQEVHD. Residues 15-25 are compositionally biased toward basic and acidic residues; that stretch reads REPDLRQEVHD.

The protein belongs to the gamma-glutamyl phosphate reductase family.

The protein resides in the cytoplasm. It catalyses the reaction L-glutamate 5-semialdehyde + phosphate + NADP(+) = L-glutamyl 5-phosphate + NADPH + H(+). Its pathway is amino-acid biosynthesis; L-proline biosynthesis; L-glutamate 5-semialdehyde from L-glutamate: step 2/2. Functionally, catalyzes the NADPH-dependent reduction of L-glutamate 5-phosphate into L-glutamate 5-semialdehyde and phosphate. The product spontaneously undergoes cyclization to form 1-pyrroline-5-carboxylate. The chain is Gamma-glutamyl phosphate reductase from Mycobacterium marinum (strain ATCC BAA-535 / M).